We begin with the raw amino-acid sequence, 711 residues long: MLNPIVRKFQYGQHTVTLETGMMARQATAAVMVSMDDTAVFVTVVGQKKAKPGQDFFPLTVNYQERTYAAGRIPGSFFRREGRPSEGETLIARLIDRPIRPLFPEGFVNEVQVIATVVSVNPQVNPDIVAMIGASAALSLSGIPFNGPIGAARVGYINDQYVLNPTQDELKESKLDLVVAGTEAAVLMVESEAELLSEDQMLGAVVFGHEQQQVVIQNINELVKEAGKPRWDWQPEPVNEALNARVAALAEARLSDAYRITDKQERYAQVDVIKSETIATLLAEDENLDENELGEILHAIEKNVVRSRVLAGEPRIDGREKDMIRGLDVRTGVLPRTHGSALFTRGETQALVTATLGTARDAQVLDELMGERTDTFLFHYNFPPYSVGETGMVGSPKRREIGHGRLAKRGVLAVMPDMDKFPYTVRVVSEITESNGSSSMASVCGASLALMDAGVPIKAAVAGIAMGLVKEGDNYVVLSDILGDEDHLGDMDFKVAGSRDGISALQMDIKIEGITKEIMQVALNQAKGARLHILGVMEQAINAPRGDISEFAPRIHTIKINPDKIKDVIGKGGSVIRALTEETGTTIEIEDDGTVKIAATDGEKAKHAIRRIEEITAEIEVGRVYTGKVTRIVDFGAFVAIGGGKEGLVHISQIADKRVEKVTDYLQMGQEVPVKVLEVDRQGRIRLSIKEATEQSQPAAAPEAPAAEQGE.

2 residues coordinate Mg(2+): D486 and D492. Positions P553 to I612 constitute a KH domain. One can recognise an S1 motif domain in the interval G622–K690. A disordered region spans residues I689–E711. The segment covering E694–E711 has biased composition (low complexity).

It belongs to the polyribonucleotide nucleotidyltransferase family. In terms of assembly, component of the RNA degradosome, which is a multiprotein complex involved in RNA processing and mRNA degradation. Mg(2+) serves as cofactor.

The protein resides in the cytoplasm. It catalyses the reaction RNA(n+1) + phosphate = RNA(n) + a ribonucleoside 5'-diphosphate. Involved in mRNA degradation. Catalyzes the phosphorolysis of single-stranded polyribonucleotides processively in the 3'- to 5'-direction. The chain is Polyribonucleotide nucleotidyltransferase from Escherichia coli O8 (strain IAI1).